We begin with the raw amino-acid sequence, 222 residues long: Ras-related protein RabT1 (222 aa).

37-44 (GDNKTGKS) is a GTP binding site. Residues 59–66 (VSSIGVDF) carry the Effector region motif. Residues 85–89 (DVNSC) and 145–148 (NKCD) contribute to the GTP site. Cysteine methyl ester is present on cysteine 219. A lipid anchor (S-geranylgeranyl cysteine) is attached at cysteine 219. Positions 220–222 (NIL) are cleaved as a propeptide — removed in mature form.

This sequence belongs to the small GTPase superfamily. Rab family.

Its subcellular location is the cell membrane. The polypeptide is Ras-related protein RabT1 (rabT1) (Dictyostelium discoideum (Social amoeba)).